The sequence spans 277 residues: 3-methyl-2-oxobutanoate hydroxymethyltransferase (277 aa).

Aspartate 43 and aspartate 82 together coordinate Mg(2+). 3-methyl-2-oxobutanoate is bound by residues 43-44 (DS), aspartate 82, and lysine 112. Glutamate 114 lines the Mg(2+) pocket. The Proton acceptor role is filled by glutamate 181.

Belongs to the PanB family. Homodecamer; pentamer of dimers. Requires Mg(2+) as cofactor.

It is found in the cytoplasm. It carries out the reaction 3-methyl-2-oxobutanoate + (6R)-5,10-methylene-5,6,7,8-tetrahydrofolate + H2O = 2-dehydropantoate + (6S)-5,6,7,8-tetrahydrofolate. Its pathway is cofactor biosynthesis; (R)-pantothenate biosynthesis; (R)-pantoate from 3-methyl-2-oxobutanoate: step 1/2. In terms of biological role, catalyzes the reversible reaction in which hydroxymethyl group from 5,10-methylenetetrahydrofolate is transferred onto alpha-ketoisovalerate to form ketopantoate. The polypeptide is 3-methyl-2-oxobutanoate hydroxymethyltransferase (Bacillus velezensis (strain DSM 23117 / BGSC 10A6 / LMG 26770 / FZB42) (Bacillus amyloliquefaciens subsp. plantarum)).